Reading from the N-terminus, the 295-residue chain is 2S seed storage protein (295 aa).

An N-terminal signal peptide occupies residues 1 to 20 (MAKQIVLALAFAALVAFATA). The propeptide occupies 21–161 (HTTIITTTIE…TITTTVTESN (141 aa)). A compositionally biased stretch (polar residues) spans 195 to 208 (EQQMQQSPRSTRPY). The segment at 195 to 215 (EQQMQQSPRSTRPYQQRPGQQ) is disordered.

Belongs to the 2S seed storage albumins family. The 38 kDa precursor may be cleaved into two polypeptides of approximately the same size. The mature protein is composed of a single polypeptide containing one or more intra-molecular disulfide linkages.

In terms of biological role, this is a 2S seed storage protein. This chain is 2S seed storage protein (HAG5), found in Helianthus annuus (Common sunflower).